We begin with the raw amino-acid sequence, 312 residues long: DNA-directed RNA polymerase subunit alpha (312 aa).

Residues 1 to 226 (MIEFEKPRIE…EHLDIFVNLT (226 aa)) are alpha N-terminal domain (alpha-NTD). Residues 243-312 (KEKMLEMTIE…DLGLGLRKDD (70 aa)) form an alpha C-terminal domain (alpha-CTD) region.

This sequence belongs to the RNA polymerase alpha chain family. Homodimer. The RNAP catalytic core consists of 2 alpha, 1 beta, 1 beta' and 1 omega subunit. When a sigma factor is associated with the core the holoenzyme is formed, which can initiate transcription.

It catalyses the reaction RNA(n) + a ribonucleoside 5'-triphosphate = RNA(n+1) + diphosphate. Functionally, DNA-dependent RNA polymerase catalyzes the transcription of DNA into RNA using the four ribonucleoside triphosphates as substrates. This Enterococcus faecalis (strain ATCC 700802 / V583) protein is DNA-directed RNA polymerase subunit alpha.